We begin with the raw amino-acid sequence, 1394 residues long: DNA-directed RNA polymerase subunit beta' (1394 aa).

Zn(2+) is bound by residues Cys-71, Cys-73, Cys-86, and Cys-89. Mg(2+) is bound by residues Asp-462, Asp-464, and Asp-466. Zn(2+)-binding residues include Cys-810, Cys-883, Cys-890, and Cys-893.

It belongs to the RNA polymerase beta' chain family. The RNAP catalytic core consists of 2 alpha, 1 beta, 1 beta' and 1 omega subunit. When a sigma factor is associated with the core the holoenzyme is formed, which can initiate transcription. The cofactor is Mg(2+). It depends on Zn(2+) as a cofactor.

It catalyses the reaction RNA(n) + a ribonucleoside 5'-triphosphate = RNA(n+1) + diphosphate. Functionally, DNA-dependent RNA polymerase catalyzes the transcription of DNA into RNA using the four ribonucleoside triphosphates as substrates. In Beijerinckia indica subsp. indica (strain ATCC 9039 / DSM 1715 / NCIMB 8712), this protein is DNA-directed RNA polymerase subunit beta'.